Reading from the N-terminus, the 478-residue chain is Antiviral innate immune response effector IFIT1 (478 aa).

TPR repeat units lie at residues 52–85, 95–128, 139–174, 183–216, 218–249, and 251–284; these read VGIHNLLAYVKHLKGQNEEALKSLKEAEDLMQKE, LVTWSNFAWVYYHMGRLAEAQAYLDKVENICKKP, PEIDCEEGWALLKCGGKNYERAKACFEKALEGDHEN, ISAYRLDGFKLATKGYRQFSLLPLRQAVSLNPDN, YLKVLLALKLQDNGQEAEGEKYLEEALANMSS, and TYVFRYAAKFYRRKGSVDKALELLKKALQETPTS. W147 serves as a coordination point for mRNA. Position 190 (G190) interacts with RNA. 4 residues coordinate RNA: K259, H289, Q290, and K336. TPR repeat units lie at residues 305–339, 340–373, 378–412, and 437–470; these read ATKGQPRGQNREKIDKMIRLAIFHFESAVENKPTF, EVAHLDLARMYIEAGNHRKAEETFQKLLCMKPVV, QDIHLQYARFQEFQKKSEINAIIHYLKAIKIEQTS, and LESLSLLGFVYKLKGNMNEALEYYERALRLAADF.

Belongs to the IFIT family. In terms of assembly, component of an interferon-dependent multiprotein complex, at least composed of IFIT1, IFIT2 and IFIT3. Interacts (via TPR repeats 1-4) with RPL15. Interacts with STING1/MITA; could disrupt STING1 interaction with MAVS or TBK1, acting as a negative-feedback regulator of virus-triggered signaling. Interacts with EIF3E; this could be an alternative way to inhibit translation. Phosphorylated. In terms of processing, ISGylated.

It localises to the cytoplasm. Functionally, plays a key role in the innate immune response as part of an interferon-dependent multiprotein complex, recognizing and sequestering viral RNAs that lack host-specific 2'-O-methylation at their 5' cap. By distinguishing these RNAs from host mRNAs, inhibits their translation by competing with the translation initiation factor eIF4E. Could also prevent viral replication through its interaction with DNA replication origin-binding protein E1 of several viruses. Causes the translocation of E1 from the nucleus to the cytoplasm and can also inhibit its helicase activity in vitro. This is Antiviral innate immune response effector IFIT1 from Macaca fascicularis (Crab-eating macaque).